The primary structure comprises 188 residues: Inner kinetochore subunit cnl2 (188 aa).

It belongs to the NKP2 family. In terms of assembly, component of the inner kinetochore constitutive centromere-associated network (CCAN) (also known as central kinetochore Sim4 complex in fission yeast), which is composed of at least cnl2, cnp3, cnp20, fta1, fta2, fta3, fta4, fta6, fta7, mal2, mhf1, mhf2, mis6, mis15, mis17, sim4 and wip1.

It is found in the cytoplasm. It localises to the nucleus. The protein localises to the chromosome. Its subcellular location is the centromere. The protein resides in the kinetochore. Functionally, component of the kinetochore, a multiprotein complex that assembles on centromeric DNA and attaches chromosomes to spindle microtubules, mediating chromosome segregation and sister chromatid segregation during meiosis and mitosis. Component of the inner kinetochore constitutive centromere-associated network (CCAN), which serves as a structural platform for outer kinetochore assembly. The chain is Inner kinetochore subunit cnl2 (cnl2) from Schizosaccharomyces pombe (strain 972 / ATCC 24843) (Fission yeast).